The chain runs to 710 residues: Amyloid beta precursor protein binding family B member 1 (710 aa).

Residues 1-15 are compositionally biased toward polar residues; that stretch reads MSVPSSLSQSAINAN. 4 disordered regions span residues 1–24, 131–254, 276–299, and 340–365; these read MSVP…ALSL, GLRG…TDSD, GTTQ…EESQ, and TFPA…NTNP. Positions 145-173 are enriched in acidic residues; it reads GPDEGEEKAAGEAEEEEEDDDDEEEEEDL. At K204 the chain carries N6-acetyllysine. Polar residues predominate over residues 223–234; it reads SWATLSQGSPSY. Residues 253-285 form the WW domain; the sequence is SDLPAGWMRVQDTSGTYYWHIPTGTTQWEPPGR. Over residues 287–299 the composition is skewed to low complexity; it reads SPSQGSSPQEESQ. Residues 370–509 form the PID 1 domain; it reads FAVRSLGWVE…SKIMAERRNA (140 aa). S459 carries the post-translational modification Phosphoserine; by PKC. S517 is subject to Phosphoserine. Residues 542 to 699 form the PID 2 domain; it reads KFQVYYLGNV…RRGVQSLWGS (158 aa). The residue at position 547 (Y547) is a Phosphotyrosine; by ABL1. A Phosphoserine; by SGK1 modification is found at S610. Residue K701 is modified to N6-acetyllysine.

In terms of assembly, component of a complex, at least composed of APBB1, RASD1/DEXRAS1 and APP. Interacts (via PID domain 2) with APP (with the intracellular domain of the amyloid-beta precursor protein). Interacts (via PID domain 2) with RASD1/DEXRAS1; impairs the transcription activation activity. Interacts (via PID domain 1) with KAT5/TIP60. Interacts (via the WW domain) with the proline-rich region of APBB1IP. Interacts with TSHZ1 and TSHZ2. Interacts (via the WW domain) with histone H2AX (when phosphorylated on 'Tyr-142') and the proline-rich region of ENAH. Interacts with MAPK8. Interacts (via PID domain 1) with TSHZ3 (via homeobox domain). Interacts with SET. Found in a trimeric complex with HDAC1 and TSHZ3; the interaction between HDAC1 and APBB1 is mediated by TSHZ3. Interacts (via WWW domain) with NEK6. Interacts (via WWW domain) with ABL1. Interacts with RNF157. Interacts with ARF6. Post-translationally, phosphorylation at Ser-610 by SGK1 promotes its localization to the nucleus. Phosphorylated following nuclear translocation. Phosphorylation at Tyr-547 by ABL1 enhances transcriptional activation activity and reduces the affinity for RASD1/DEXRAS1. Phosphorylated at Ser-459 by PKC upon insulin activation. In terms of processing, acetylation at Lys-204 and Lys-701 by KAT5 promotes its transcription activator activity. Polyubiquitination by RNF157 leads to degradation by the proteasome. As to expression, highly expressed in brain; strongly reduced in post-mortem elderly subjects with Alzheimer disease. Expressed preferentially in the brain.

The protein resides in the cell membrane. It is found in the cytoplasm. It localises to the nucleus. The protein localises to the cell projection. Its subcellular location is the growth cone. The protein resides in the nucleus speckle. Functionally, transcription coregulator that can have both coactivator and corepressor functions. Adapter protein that forms a transcriptionally active complex with the gamma-secretase-derived amyloid precursor protein (APP) intracellular domain. Plays a central role in the response to DNA damage by translocating to the nucleus and inducing apoptosis. May act by specifically recognizing and binding histone H2AX phosphorylated on 'Tyr-142' (H2AXY142ph) at double-strand breaks (DSBs), recruiting other pro-apoptosis factors such as MAPK8/JNK1. Required for histone H4 acetylation at double-strand breaks (DSBs). Its ability to specifically bind modified histones and chromatin modifying enzymes such as KAT5/TIP60, probably explains its transcription activation activity. Functions in association with TSHZ3, SET and HDAC factors as a transcriptional repressor, that inhibits the expression of CASP4. Associates with chromatin in a region surrounding the CASP4 transcriptional start site(s). Involved in hippocampal neurite branching and neuromuscular junction formation, as a result plays a role in spatial memory functioning. Plays a role in the maintenance of lens transparency. May play a role in muscle cell strength. Acts as a molecular adapter that functions in neurite outgrowth by activating the RAC1-ARF6 axis upon insulin treatment. The polypeptide is Amyloid beta precursor protein binding family B member 1 (Homo sapiens (Human)).